A 199-amino-acid chain; its full sequence is Interleukin-11 (199 aa).

An N-terminal signal peptide occupies residues 1–21; the sequence is MNCVCRLVLVVLSLWPDTAVA. The tract at residues 182-190 is important for interaction with IL11RA and for the stimulation of cell proliferation; the sequence is HLTLDWAVR.

It belongs to the IL-6 superfamily. Interacts with IL11RA to associate with IL6ST, giving rise to a multimeric signaling complex.

Its subcellular location is the secreted. Cytokine that stimulates the proliferation of hematopoietic stem cells and megakaryocyte progenitor cells and induces megakaryocyte maturation resulting in increased platelet production. Also promotes the proliferation of hepatocytes in response to liver damage. Binding to its receptor formed by IL6ST and IL11RA activates a signaling cascade that promotes cell proliferation. Signaling leads to the activation of intracellular protein kinases and the phosphorylation of STAT3. The interaction with the membrane-bound IL11RA and IL6ST stimulates 'classic signaling', whereas the binding of IL11 and soluble IL11RA to IL6ST stimulates 'trans-signaling'. In Macaca fascicularis (Crab-eating macaque), this protein is Interleukin-11 (IL11).